The sequence spans 170 residues: NADH-quinone oxidoreductase subunit B (170 aa).

The [4Fe-4S] cluster site is built by C42, C43, C107, and C136.

This sequence belongs to the complex I 20 kDa subunit family. In terms of assembly, NDH-1 is composed of 14 different subunits. Subunits NuoB, C, D, E, F, and G constitute the peripheral sector of the complex. [4Fe-4S] cluster serves as cofactor.

Its subcellular location is the cell inner membrane. The catalysed reaction is a quinone + NADH + 5 H(+)(in) = a quinol + NAD(+) + 4 H(+)(out). Its function is as follows. NDH-1 shuttles electrons from NADH, via FMN and iron-sulfur (Fe-S) centers, to quinones in the respiratory chain. The immediate electron acceptor for the enzyme in this species is believed to be ubiquinone. Couples the redox reaction to proton translocation (for every two electrons transferred, four hydrogen ions are translocated across the cytoplasmic membrane), and thus conserves the redox energy in a proton gradient. The polypeptide is NADH-quinone oxidoreductase subunit B (Campylobacter curvus (strain 525.92)).